The primary structure comprises 649 residues: Transmembrane and coiled-coil domains protein 1 (649 aa).

Methionine 1 carries the N-acetylmethionine modification. Disordered stretches follow at residues 1 to 37 (MEPS…LSKM), 58 to 83 (HQRR…EVDL), 110 to 166 (RVPP…PTSS), and 197 to 222 (LAQT…GIPD). Topologically, residues 1–587 (MEPSGSEQLY…ARNLLGKLIN (587 aa)) are cytoplasmic. Positions 20–34 (QDAEARRQTESEQKL) are enriched in basic and acidic residues. Positions 64-75 (SVSPHDVQQIQT) are enriched in polar residues. The segment covering 113-125 (PKMKRGTSLHSRR) has biased composition (basic residues). Residues 156 to 166 (SSSTTDAPTSS) show a composition bias toward low complexity. A compositionally biased stretch (polar residues) spans 197–214 (LAQTSSAVASSTDGSIHT). Positions 224 to 310 (QRTKAAIAHL…KLREVEQNGI (87 aa)) form a coiled coil. Phosphoserine occurs at positions 378 and 410. Residues 411–433 (PKYGSEEDCSSATSGSVGANSTT) are disordered. Over residues 420-433 (SSATSGSVGANSTT) the composition is skewed to polar residues. Residues 457–566 (ALLHEVQEIR…KMELQQQQQQ (110 aa)) are a coiled coil. Transmembrane regions (helical) follow at residues 588–608 (ILLA…NCVV) and 621–641 (LFLV…FSYV). Topologically, residues 642–649 (DRLFSPPR) are cytoplasmic.

The protein belongs to the TEX28 family. May form homodimers and heterodimers with TMCC2 or TMCC3 via the coiled-coil domains. Interacts with ribosomal proteins RPL4 and RPS6.

It is found in the endoplasmic reticulum membrane. In terms of biological role, endoplasmic reticulum membrane protein that promotes endoplasmic reticulum-associated endosome fission. Localizes to contact sites between the endoplasmic reticulum and endosomes and acts by promoting recruitment of the endoplasmic reticulum to endosome tubules for fission. Endosome membrane fission of early and late endosomes is essential to separate regions destined for lysosomal degradation from carriers to be recycled to the plasma membrane. The protein is Transmembrane and coiled-coil domains protein 1 (Tmcc1) of Mus musculus (Mouse).